Here is a 498-residue protein sequence, read N- to C-terminus: Polyphosphate:AMP phosphotransferase (498 aa).

2 PPK2 regions span residues 11-234 (IDDD…MQAA) and 269-491 (LSKE…LEKA).

It belongs to the polyphosphate kinase 2 (PPK2) family. Class II subfamily.

The catalysed reaction is [phosphate](n) + ADP = [phosphate](n+1) + AMP. Functionally, uses inorganic polyphosphate (polyP) as a donor to convert AMP to ADP. Can also convert GMP to GDP, with lower efficiency. The polypeptide is Polyphosphate:AMP phosphotransferase (Pseudomonas syringae pv. tomato (strain ATCC BAA-871 / DC3000)).